The chain runs to 361 residues: Phospho-N-acetylmuramoyl-pentapeptide-transferase (361 aa).

The next 10 helical transmembrane spans lie at 25–45, 72–92, 95–115, 135–155, 169–189, 200–220, 240–260, 264–284, 289–309, and 338–358; these read TGGA…WIID, TPTM…VLWA, LNPY…VGFY, LLIE…LGRG, VVLN…VGAG, GLAI…SYLV, LAVL…FNAP, IFMG…IAVA, IVLA…IVQV, and QIVI…LSTL.

This sequence belongs to the glycosyltransferase 4 family. MraY subfamily. The cofactor is Mg(2+).

The protein localises to the cell inner membrane. The catalysed reaction is UDP-N-acetyl-alpha-D-muramoyl-L-alanyl-gamma-D-glutamyl-meso-2,6-diaminopimeloyl-D-alanyl-D-alanine + di-trans,octa-cis-undecaprenyl phosphate = di-trans,octa-cis-undecaprenyl diphospho-N-acetyl-alpha-D-muramoyl-L-alanyl-D-glutamyl-meso-2,6-diaminopimeloyl-D-alanyl-D-alanine + UMP. It functions in the pathway cell wall biogenesis; peptidoglycan biosynthesis. In terms of biological role, catalyzes the initial step of the lipid cycle reactions in the biosynthesis of the cell wall peptidoglycan: transfers peptidoglycan precursor phospho-MurNAc-pentapeptide from UDP-MurNAc-pentapeptide onto the lipid carrier undecaprenyl phosphate, yielding undecaprenyl-pyrophosphoryl-MurNAc-pentapeptide, known as lipid I. This Rhodopseudomonas palustris (strain HaA2) protein is Phospho-N-acetylmuramoyl-pentapeptide-transferase.